The sequence spans 570 residues: nebramycin 5' synthase (570 aa).

The kae1-like stretch occupies residues 1–354 (MRVLGLNGWP…AAAAVAVELG (354 aa)). Asp-12 provides a ligand contact to tobramycin. Catalysis depends on His-14, which acts as the Proton acceptor. Lys-39 serves as a coordination point for ATP. Positions 114, 118, and 137 each coordinate Fe cation. Carbamoyl adenylate contacts are provided by Gln-139, Gly-168, and Glu-172. Tobramycin is bound by residues Glu-172 and Asp-228. Gly-310 and Asn-314 together coordinate carbamoyl adenylate. Asp-338 is a binding site for Fe cation. The tract at residues 367 to 570 (GPEFSPDQVR…PYLVTKDLRH (204 aa)) is yrdC-like. ATP is bound by residues Arg-418 and Arg-449. Residue 418 to 419 (RA) participates in carbamoyl phosphate binding. Carbamoyl phosphate-binding positions include Arg-498 and 528–530 (NTS).

The protein belongs to the NodU/CmcH family. Requires Fe(2+) as cofactor.

It catalyses the reaction tobramycin + carbamoyl phosphate + ATP + H2O = nebramycin 5' + AMP + phosphate + diphosphate + H(+). The enzyme catalyses kanamycin A + carbamoyl phosphate + ATP + H2O = 6''-O-carbamoylkanamycin A + AMP + phosphate + diphosphate + H(+). It carries out the reaction carbamoyl phosphate + ATP + H2O = carbamoyl adenylate + phosphate + diphosphate. The catalysed reaction is tobramycin + carbamoyl adenylate = nebramycin 5' + AMP + H(+). It catalyses the reaction carbamoyl adenylate + kanamycin A = 6''-O-carbamoylkanamycin A + AMP + H(+). It functions in the pathway antibiotic biosynthesis; kanamycin biosynthesis. It participates in antibiotic biosynthesis; tobramycin biosynthesis. With respect to regulation, ADP inhibits the formation of nebramycin 5'. Its function is as follows. TobZ is involved in the biosynthesis of the 2-deoxystreptamine-containing aminoglycoside antibiotics such as nebramycin 5 and 6-O-carbamoylkanamycin. Catalyzes the hydrolysis of carbamoyl phosphate and its subsequent adenylation by ATP to yield O-carbamoyladenylate. Then it catalyzes the transfer of the carbamoyl moiety from O-carbamoyladenylate to the tobramycin 6-hydroxy group to yield nebramycin 5'. It catalyzes the same reaction with kanamycin A. These reactions are considerably slower in the presence of deoxy-ATP. The polypeptide is nebramycin 5' synthase (tobZ) (Streptoalloteichus tenebrarius (strain ATCC 17920 / DSM 40477 / JCM 4838 / CBS 697.72 / NBRC 16177 / NCIMB 11028 / NRRL B-12390 / A12253. 1 / ISP 5477) (Streptomyces tenebrarius)).